Reading from the N-terminus, the 635-residue chain is Phosphatidylserine decarboxylase proenzyme 3 (635 aa).

The segment at 1–42 (MGNGNSTETKESRRSKMRKKIQNFRSRRRLSRPGSGSVSGLA) is disordered. G2 carries the N-myristoyl glycine lipid modification. Basic residues predominate over residues 15-31 (SKMRKKIQNFRSRRRLS). The region spanning 22 to 147 (QNFRSRRRLS…VVQEPDSTCK (126 aa)) is the C2 domain. EF-hand domains follow at residues 180–210 (AKRI…FGNV) and 211–246 (VAAN…QQEQ). D188, D190, D192, K194, E199, D224, N226, D228, and E235 together coordinate Ca(2+). Catalysis depends on charge relay system; for autoendoproteolytic cleavage activity residues D442, H498, and S586. Catalysis depends on S586, which acts as the Schiff-base intermediate with substrate; via pyruvic acid; for decarboxylase activity. Residue S586 is modified to Pyruvic acid (Ser); by autocatalysis.

This sequence belongs to the phosphatidylserine decarboxylase family. PSD-B subfamily. Eukaryotic type II sub-subfamily. Heterodimer of a large membrane-associated beta subunit and a small pyruvoyl-containing alpha subunit. Pyruvate is required as a cofactor. Is synthesized initially as an inactive proenzyme. Formation of the active enzyme involves a self-maturation process in which the active site pyruvoyl group is generated from an internal serine residue via an autocatalytic post-translational modification. Two non-identical subunits are generated from the proenzyme in this reaction, and the pyruvate is formed at the N-terminus of the alpha chain, which is derived from the carboxyl end of the proenzyme. The autoendoproteolytic cleavage occurs by a canonical serine protease mechanism, in which the side chain hydroxyl group of the serine supplies its oxygen atom to form the C-terminus of the beta chain, while the remainder of the serine residue undergoes an oxidative deamination to produce ammonia and the pyruvoyl prosthetic group on the alpha chain. During this reaction, the Ser that is part of the protease active site of the proenzyme becomes the pyruvoyl prosthetic group, which constitutes an essential element of the active site of the mature decarboxylase. As to expression, expressed in roots, leaves, stems and flowers.

The protein localises to the endoplasmic reticulum membrane. The enzyme catalyses a 1,2-diacyl-sn-glycero-3-phospho-L-serine + H(+) = a 1,2-diacyl-sn-glycero-3-phosphoethanolamine + CO2. The protein operates within phospholipid metabolism; phosphatidylethanolamine biosynthesis; phosphatidylethanolamine from CDP-diacylglycerol: step 2/2. Functionally, catalyzes the formation of phosphatidylethanolamine (PtdEtn) from phosphatidylserine (PtdSer). Plays a central role in phospholipid metabolism and in the interorganelle trafficking of phosphatidylserine. Contributes only to a minor proportion of PtdEtn production. In Arabidopsis thaliana (Mouse-ear cress), this protein is Phosphatidylserine decarboxylase proenzyme 3 (PSD3).